The primary structure comprises 95 residues: GIPCGESCVFIPCISTVIGCSCKNKVCYRNHVIAAEAKTMDDHHLLCQSHEDCITKGTGNFCAPFPDQDIKYGWCFRAESEGFMLKDHLKMSITN.

A cross-link (cyclopeptide (Gly-Asn)) is located at residues 1–30 (GIPCGESCVFIPCISTVIGCSCKNKVCYRN). 3 cysteine pairs are disulfide-bonded: Cys4-Cys20, Cys8-Cys22, and Cys13-Cys27. Positions 31-95 (HVIAAEAKTM…KDHLKMSITN (65 aa)) are cleaved as a propeptide — removed in mature form.

In terms of processing, contains 3 disulfide bonds. Post-translationally, this is a cyclic peptide. As to expression, expressed in stem, shoot, root, leaf, pod and nodule but not in flower and seed (at protein level).

Functionally, probably participates in a plant defense mechanism. This Clitoria ternatea (Butterfly pea) protein is Cliotide T5.